A 194-amino-acid polypeptide reads, in one-letter code: Archaetidylinositol phosphate synthase (194 aa).

The next 2 membrane-spanning stretches (helical) occupy residues 32–51 and 58–78; these read IYTL…WLYI and LLIA…RFTG. Mg(2+) contacts are provided by D67, D70, D88, and D92. D92 acts as the Proton acceptor in catalysis. A run of 3 helical transmembrane segments spans residues 103-123, 150-170, and 172-192; these read LYIA…GLIV, IAIL…LALA, and AAAV…AGEL.

This sequence belongs to the CDP-alcohol phosphatidyltransferase class-I family. Mn(2+) is required as a cofactor. It depends on Mg(2+) as a cofactor.

The protein localises to the cell membrane. The catalysed reaction is CDP-2,3-bis-O-(phytanyl)-sn-glycerol + 1D-myo-inositol 3-phosphate = saturated 1-archaetidyl-1D-myo-inositol 3-phosphate + CMP + H(+). It participates in lipid metabolism; phospholipid metabolism. In terms of biological role, catalyzes the formation of archaetidylinositol phosphate (AIP) from CDP-archaeol (CDP-ArOH or CDP-2,3-bis-(O-phytanyl)-sn-glycerol) and 1L-myo-inositol 1-phosphate (IP or 1D-myo-inositol 3-phosphate). AIP is a precursor of archaetidyl-myo-inositol (AI), an ether-type inositol phospholipid ubiquitously distributed in archaea membranes and essential for glycolipid biosynthesis in archaea. The sequence is that of Archaetidylinositol phosphate synthase from Aeropyrum pernix (strain ATCC 700893 / DSM 11879 / JCM 9820 / NBRC 100138 / K1).